A 262-amino-acid polypeptide reads, in one-letter code: Carbohydrate deacetylase (262 aa).

Histidine 129 contributes to the Mg(2+) binding site.

The protein belongs to the YdjC deacetylase family. In terms of assembly, homodimer. Requires Mg(2+) as cofactor.

Its function is as follows. Probably catalyzes the deacetylation of acetylated carbohydrates an important step in the degradation of oligosaccharides. The polypeptide is Carbohydrate deacetylase (Enterococcus faecalis (strain ATCC 700802 / V583)).